Consider the following 464-residue polypeptide: Sensor histidine kinase Hik34 (464 aa).

The region spanning 235-449 (ALTHEVRTPL…ILTIYLKCEQ (215 aa)) is the Histidine kinase domain. H238 is modified (phosphohistidine; by autocatalysis).

In terms of processing, when expressed in E.coli autophosphorylates at 18 to 30 degrees Celsius; less phosphorylation occurs at 36 and none occurs at 42 or 48 degrees Celsius.

The catalysed reaction is ATP + protein L-histidine = ADP + protein N-phospho-L-histidine.. Member of a two-component system Hik34/Rre1, controlling expression of at least 20 genes in response to hyperosmotic stress (0.5 M sorbitol) or salt (0.5 M NaCl). Represses expression of heat shock genes under normal growth conditions. Required for survival of long-term heat shock exposure. This Synechocystis sp. (strain ATCC 27184 / PCC 6803 / Kazusa) protein is Sensor histidine kinase Hik34.